The chain runs to 344 residues: Glycerol-3-phosphate dehydrogenase [NAD(P)+] (344 aa).

NADPH-binding residues include Ser11, Trp12, His32, Arg33, and Lys106. The sn-glycerol 3-phosphate site is built by Lys106, Gly136, and Ser138. Ala140 is an NADPH binding site. Lys192, Asp245, Ser255, Arg256, and Asn257 together coordinate sn-glycerol 3-phosphate. Catalysis depends on Lys192, which acts as the Proton acceptor. Position 256 (Arg256) interacts with NADPH. Val280 and Glu282 together coordinate NADPH.

It belongs to the NAD-dependent glycerol-3-phosphate dehydrogenase family.

The protein resides in the cytoplasm. It carries out the reaction sn-glycerol 3-phosphate + NAD(+) = dihydroxyacetone phosphate + NADH + H(+). The enzyme catalyses sn-glycerol 3-phosphate + NADP(+) = dihydroxyacetone phosphate + NADPH + H(+). It participates in membrane lipid metabolism; glycerophospholipid metabolism. Catalyzes the reduction of the glycolytic intermediate dihydroxyacetone phosphate (DHAP) to sn-glycerol 3-phosphate (G3P), the key precursor for phospholipid synthesis. The protein is Glycerol-3-phosphate dehydrogenase [NAD(P)+] of Geobacillus kaustophilus (strain HTA426).